A 730-amino-acid chain; its full sequence is Zinc finger protein 615 (730 aa).

The region spanning 7–78 is the KRAB domain; that stretch reads LTLEDVAVDF…EDEIYSRICF (72 aa). 19 C2H2-type zinc fingers span residues 203 to 225, 231 to 253, 259 to 281, 287 to 309, 315 to 337, 343 to 365, 371 to 393, 399 to 421, 427 to 449, 455 to 477, 483 to 505, 511 to 533, 539 to 561, 567 to 589, 595 to 617, 623 to 645, 651 to 673, 679 to 701, and 707 to 729; these read HVCSECGKAFLKLSQFIDHQRVH, HVCSMCGKAFSRKSRLMDHQRTH, YECTECDKTFLKKSQLNIHQKTH, YTCSECGKAFIKKCRLIYHQRTH, HGCSVCGKAFSTKFSLTTHQKTH, YICSECGKGFIEKRRLIAHHRTH, FICNKCGKGFTLKNSLITHQQTH, YTCSECGKGFSMKHCLMVHQRTH, YKCNECGKGFALKSPLIRHQRTH, YVCTECRKGFTMKSDLIVHQRTH, YICNDCGKGFTVKSRLIVHQRTH, YVCGECGKGFPAKIRLMGHQRTH, YICDECGKGFTEKSHLNVHRRTH, YVCSECGKGLTGKSMLIAHQRTH, YICNECGKGFTMKSTLSIHQQTH, YKCNECDKSFRKKTCLIQHQRFH, FACTECGKFSLRKNDLITHQRIH, YKCSDCGKAFTTKSGLNVHQRKH, and YGCSDCGKAFAHLSILVKHKRIH.

Belongs to the krueppel C2H2-type zinc-finger protein family.

It is found in the nucleus. May be involved in transcriptional regulation. The protein is Zinc finger protein 615 (ZNF615) of Pongo abelii (Sumatran orangutan).